The primary structure comprises 269 residues: Tryptophan synthase alpha chain (269 aa).

Catalysis depends on proton acceptor residues glutamate 49 and aspartate 60.

The protein belongs to the TrpA family. Tetramer of two alpha and two beta chains.

It carries out the reaction (1S,2R)-1-C-(indol-3-yl)glycerol 3-phosphate + L-serine = D-glyceraldehyde 3-phosphate + L-tryptophan + H2O. It participates in amino-acid biosynthesis; L-tryptophan biosynthesis; L-tryptophan from chorismate: step 5/5. In terms of biological role, the alpha subunit is responsible for the aldol cleavage of indoleglycerol phosphate to indole and glyceraldehyde 3-phosphate. In Actinobacillus pleuropneumoniae serotype 5b (strain L20), this protein is Tryptophan synthase alpha chain.